The primary structure comprises 122 residues: Large ribosomal subunit protein uL14 (122 aa).

Belongs to the universal ribosomal protein uL14 family. As to quaternary structure, part of the 50S ribosomal subunit. Forms a cluster with proteins L3 and L19. In the 70S ribosome, L14 and L19 interact and together make contacts with the 16S rRNA in bridges B5 and B8.

Its function is as follows. Binds to 23S rRNA. Forms part of two intersubunit bridges in the 70S ribosome. This chain is Large ribosomal subunit protein uL14, found in Streptomyces griseus subsp. griseus (strain JCM 4626 / CBS 651.72 / NBRC 13350 / KCC S-0626 / ISP 5235).